Here is a 652-residue protein sequence, read N- to C-terminus: Engulfment and cell motility protein 3 (652 aa).

Positions 307–479 (EQREQLQALR…VVREQLARTL (173 aa)) constitute an ELMO domain.

As to quaternary structure, probably interacts directly with the SH3-domain of DOCK1 via its SH3-binding site. Part of a complex with DOCK1 and RAC1. Interacts with ADGRB3.

It localises to the cytoplasm. In terms of biological role, involved in cytoskeletal rearrangements required for phagocytosis of apoptotic cells and cell motility. Acts in association with DOCK1 and CRK. Was initially proposed to be required in complex with DOCK1 to activate Rac Rho small GTPases. May enhance the guanine nucleotide exchange factor (GEF) activity of DOCK1. This chain is Engulfment and cell motility protein 3 (ELMO3), found in Bos taurus (Bovine).